A 94-amino-acid chain; its full sequence is Cystatin-A1 (94 aa).

The Secondary area of contact signature appears at 45–49; the sequence is QLVAG.

This sequence belongs to the cystatin family.

The protein resides in the cytoplasm. Intracellular thiol proteinase inhibitor. Inhibits papain, but not cathepsin B. The sequence is that of Cystatin-A1 (cpiA) from Dictyostelium discoideum (Social amoeba).